The sequence spans 87 residues: Defensin-like protein 100 (87 aa).

An N-terminal signal peptide occupies residues 1-29; the sequence is MRSLRLRTVVVATIVVCLSVLLSPTEVDG. Cystine bridges form between Cys31/Cys79, Cys38/Cys64, Cys44/Cys76, and Cys48/Cys78.

The protein belongs to the DEFL family.

It is found in the secreted. The polypeptide is Defensin-like protein 100 (Arabidopsis thaliana (Mouse-ear cress)).